The following is a 192-amino-acid chain: Adenylate kinase (192 aa).

ATP is bound at residue 10–18; that stretch reads GVPGVGGTT.

Belongs to the archaeal adenylate kinase family. In terms of assembly, monomer.

Its subcellular location is the cytoplasm. The enzyme catalyses AMP + ATP = 2 ADP. This chain is Adenylate kinase, found in Methanococcus maripaludis (strain C5 / ATCC BAA-1333).